The primary structure comprises 477 residues: Exodeoxyribonuclease 7 large subunit (477 aa).

The tract at residues 452-477 (KAAAAPKRVKKSPPPGTSGAQEDLFG) is disordered.

Belongs to the XseA family. Heterooligomer composed of large and small subunits.

It is found in the cytoplasm. The catalysed reaction is Exonucleolytic cleavage in either 5'- to 3'- or 3'- to 5'-direction to yield nucleoside 5'-phosphates.. Bidirectionally degrades single-stranded DNA into large acid-insoluble oligonucleotides, which are then degraded further into small acid-soluble oligonucleotides. This chain is Exodeoxyribonuclease 7 large subunit, found in Erythrobacter litoralis (strain HTCC2594).